Here is a 202-residue protein sequence, read N- to C-terminus: B-cell CLL/lymphoma 7 protein family member B (202 aa).

A disordered region spans residues 53 to 202 (DSKEKEKSKS…PVVPQTTSES (150 aa)). Positions 90-99 (ENSNQSSVSD) are enriched in polar residues. The span at 107-123 (SSTNSSPSPQQSESLSP) shows a compositional bias: low complexity. Phosphoserine is present on residues S114, S118, S120, S122, S127, S148, and S152.

Belongs to the BCL7 family.

Its function is as follows. Positive regulator of apoptosis. Plays a role in the Wnt signaling pathway, negatively regulating the expression of Wnt signaling components CTNNB1 and HMGA1. Involved in cell cycle progression, maintenance of the nuclear structure and stem cell differentiation. May play a role in lung tumor development or progression. In Mus musculus (Mouse), this protein is B-cell CLL/lymphoma 7 protein family member B (Bcl7b).